A 153-amino-acid chain; its full sequence is Transcriptional repressor NrdR (153 aa).

Residues 3 to 34 fold into a zinc finger; the sequence is CPFCAHDDSQVKDSRPAEDNAAIRRRRQCSKC. Positions 49 to 139 constitute an ATP-cone domain; it reads VTVVKSDDKR…VYRDFSEARD (91 aa).

The protein belongs to the NrdR family. Zn(2+) serves as cofactor.

Negatively regulates transcription of bacterial ribonucleotide reductase nrd genes and operons by binding to NrdR-boxes. This Erythrobacter litoralis (strain HTCC2594) protein is Transcriptional repressor NrdR.